The following is a 679-amino-acid chain: E3 ubiquitin ligase RNF157 (679 aa).

Gly2 carries N-myristoyl glycine lipidation. Residues 277–316 (CVVCLSDVRDTLILPCRHLCLCNTCADTLRYQANNCPICR) form an RING-type zinc finger. Residues 329-332 (RKKL) carry the D-box 1 motif. Polar residues-rich tracts occupy residues 339-349 (SFNPIISSQTS) and 478-537 (ESEN…SMSG). 3 disordered regions span residues 339 to 362 (SFNP…NIPP), 416 to 604 (LDRL…TQEG), and 650 to 679 (VSRN…PLAV). The segment covering 585–598 (QDAEGNDVIEEEDG) has biased composition (acidic residues). Positions 656-659 (RRRL) match the D-box 2 motif. Ser660, Ser661, Ser662, and Ser663 each carry phosphoserine.

Interacts with APBB1. Interacts with CHD1; CHD1-binding controls RNF157 stability. Interacts with ATRN, MEGF8, TECR, MSI2, PLRG1, BYSL, MTERF3, PSMA1, MRPS18B, PRPF4, FASTKD2, SLC25A1, SMU1, CNOT9, MRPS2, MAGT1, FXR2, EMD, PSMD8, HDAC1, RAN, HSD17B12, TXNDC5 and MRPL19. Post-translationally, phosphorylation at Ser-660, Ser-661, Ser-662 and Ser-663 downstream of the PI3K and MAPK pathways influences the E3 ligase activity and stability of RNF157 during the cell cycle in an anaphase-promoting complex/cyclosome-CDH1-dependent manner.

Its subcellular location is the cytoplasm. The enzyme catalyses S-ubiquitinyl-[E2 ubiquitin-conjugating enzyme]-L-cysteine + [acceptor protein]-L-lysine = [E2 ubiquitin-conjugating enzyme]-L-cysteine + N(6)-ubiquitinyl-[acceptor protein]-L-lysine.. Its function is as follows. E3 ubiquitin ligase that ubiquitinates APBB1 for its degradation by the proteasome and thus prevents apoptosis and promotes survival of neurons. Has a dual role in neurons as it is also required for dendrite growth and maintenance for which its ligase activity is not critical. May act as a scaffold molecule to regulate this process. Acts as a downstream effector of the interconnected PI3K and MAPK signaling pathways and thus participates in the regulation of the cell cycle. The polypeptide is E3 ubiquitin ligase RNF157 (RNF157) (Homo sapiens (Human)).